The chain runs to 192 residues: RNLGKVIDTLTCGFADLMGYIPLVGAPLGGAARALAHGVRVLEDGVNYATGNLPGCSFSIFLLALLSCLTVPASAYQVRNSSGLYHVTNDCPNSSIVYEAADAILHTPGCVPCVHEGNVSRCWVAMTPTVATRDGKLPTTQLRRHIDLLVGSATLCSALYVGDLCGSVFLVGQLFTFSPRRHWTTQGCNCSI.

Residues 1-52 (RNLGKVIDTLTCGFADLMGYIPLVGAPLGGAARALAHGVRVLEDGVNYATGN) lie on the Cytoplasmic side of the membrane. Residues 6 to 57 (VIDTLTCGFADLMGYIPLVGAPLGGAARALAHGVRVLEDGVNYATGNLPGCS) are interaction with APOA2. Residues 48-51 (YATG) are important for lipid droplets localization. Residues 53 to 73 (LPGCSFSIFLLALLSCLTVPA) traverse the membrane as a helical segment. Positions 62–75 (LLALLSCLTVPASA) are cleaved as a propeptide — ER anchor for the core protein, removed in mature form by host signal peptidase. Residues 74–192 (SAYQVRNSSG…WTTQGCNCSI (119 aa)) are Lumenal-facing. N-linked (GlcNAc...) asparagine; by host glycosylation is found at N80, N93, and N118. Residues 149 to 180 (LVGSATLCSALYVGDLCGSVFLVGQLFTFSPR) are important for fusion. N189 carries an N-linked (GlcNAc...) asparagine; by host glycan.

This sequence belongs to the hepacivirus polyprotein family. Homooligomer. Interacts with E1 (via C-terminus). Interacts with the non-structural protein 5A. Interacts (via N-terminus) with host STAT1 (via SH2 domain); this interaction results in decreased STAT1 phosphorylation and ubiquitin-mediated proteasome-dependent STAT1 degradation, leading to decreased IFN-stimulated gene transcription. Interacts with host STAT3; this interaction constitutively activates STAT3. Interacts with host LTBR receptor. Interacts with host TNFRSF1A receptor and possibly induces apoptosis. Interacts with host HNRPK. Interacts with host YWHAE. Interacts with host UBE3A/E6AP. Interacts with host DDX3X. Interacts with host APOA2. Interacts with host RXRA protein. Interacts with host SP110 isoform 3/Sp110b; this interaction sequesters the transcriptional corepressor SP110 away from the nucleus. Interacts with host CREB3 nuclear transcription protein; this interaction triggers cell transformation. Interacts with host ACY3. Interacts with host C1QR1. Interacts with host RBM24; this interaction, which enhances the interaction of the mature core protein with 5'-UTR, may inhibit viral translation and favor replication. Interacts with host EIF2AK2/PKR; this interaction induces the autophosphorylation of EIF2AK2. Part of the viral assembly initiation complex composed of NS2, E1, E2, NS3, NS4A, NS5A and the mature core protein. As to quaternary structure, forms a heterodimer with envelope glycoprotein E2. Interacts with mature core protein. Interacts with protease NS2. The heterodimer E1/E2 interacts with host CLDN1; this interaction plays a role in viral entry into host cell. Interacts with host SPSB2 (via C-terminus). Part of the viral assembly initiation complex composed of NS2, E1, E2, NS3, NS4A, NS5A and the mature core protein. Specific enzymatic cleavages in vivo yield mature proteins. The structural proteins, core, E1, E2 and p7 are produced by proteolytic processing by host signal peptidases. The core protein precursor is synthesized as a 23 kDa, which is retained in the ER membrane through the hydrophobic signal peptide. Cleavage by the signal peptidase releases the 21 kDa mature core protein. The cleavage of the core protein precursor occurs between aminoacids 176 and 188 but the exact cleavage site is not known. Some degraded forms of the core protein appear as well during the course of infection. The other proteins (p7, NS2, NS3, NS4A, NS4B, NS5A and NS5B) are cleaved by the viral proteases. Autoprocessing between NS2 and NS3 is mediated by the NS2 cysteine protease catalytic domain and regulated by the NS3 N-terminal domain. Post-translationally, phosphorylated by host PKC and PKA. In terms of processing, ubiquitinated; mediated by UBE3A and leading to core protein subsequent proteasomal degradation. Highly N-glycosylated.

The protein localises to the host endoplasmic reticulum membrane. It localises to the host mitochondrion membrane. It is found in the virion. The protein resides in the host cytoplasm. Its subcellular location is the host nucleus. The protein localises to the host lipid droplet. It localises to the virion membrane. Its function is as follows. Packages viral RNA to form a viral nucleocapsid, and promotes virion budding. Participates in the viral particle production as a result of its interaction with the non-structural protein 5A. Binds RNA and may function as a RNA chaperone to induce the RNA structural rearrangements taking place during virus replication. Modulates viral translation initiation by interacting with viral IRES and 40S ribosomal subunit. Affects various cell signaling pathways, host immunity and lipid metabolism. Prevents the establishment of cellular antiviral state by blocking the interferon-alpha/beta (IFN-alpha/beta) and IFN-gamma signaling pathways and by blocking the formation of phosphorylated STAT1 and promoting ubiquitin-mediated proteasome-dependent degradation of STAT1. Activates STAT3 leading to cellular transformation. Regulates the activity of cellular genes, including c-myc and c-fos. May repress the promoter of p53, and sequester CREB3 and SP110 isoform 3/Sp110b in the cytoplasm. Represses cell cycle negative regulating factor CDKN1A, thereby interrupting an important check point of normal cell cycle regulation. Targets transcription factors involved in the regulation of inflammatory responses and in the immune response: suppresses TNF-induced NF-kappa-B activation, and activates AP-1. Binds to dendritic cells (DCs) via C1QR1, resulting in down-regulation of T-lymphocytes proliferation. Alters lipid metabolism by interacting with hepatocellular proteins involved in lipid accumulation and storage. Induces up-regulation of FAS promoter activity, and thereby contributes to the increased triglyceride accumulation in hepatocytes (steatosis). Forms a heterodimer with envelope glycoprotein E2, which mediates virus attachment to the host cell, virion internalization through clathrin-dependent endocytosis and fusion with host membrane. Fusion with the host cell is most likely mediated by both E1 and E2, through conformational rearrangements of the heterodimer required for fusion rather than a classical class II fusion mechanism. E1/E2 heterodimer binds host apolipoproteins such as APOB and ApoE thereby forming a lipo-viro-particle (LVP). APOE associated to the LVP allows the initial virus attachment to cell surface receptors such as the heparan sulfate proteoglycans (HSPGs), syndecan-1 (SDC1), syndecan-1 (SDC2), the low-density lipoprotein receptor (LDLR) and scavenger receptor class B type I (SCARB1). The cholesterol transfer activity of SCARB1 allows E2 exposure and binding of E2 to SCARB1 and the tetraspanin CD81. E1/E2 heterodimer binding on CD81 activates the epithelial growth factor receptor (EGFR) signaling pathway. Diffusion of the complex E1-E2-EGFR-SCARB1-CD81 to the cell lateral membrane allows further interaction with Claudin 1 (CLDN1) and occludin (OCLN) to finally trigger HCV entry. This chain is Genome polyprotein, found in Hepatitis C virus (isolate EC1) (HCV).